Reading from the N-terminus, the 592-residue chain is Cryptochrome-2 (592 aa).

A Photolyase/cryptochrome alpha/beta domain is found at 21-150; sequence ASSVHWFRKG…EVVTENSHTL (130 aa). A Glycyl lysine isopeptide (Lys-Gly) (interchain with G-Cter in ubiquitin) cross-link involves residue Lys-29. A Phosphoserine modification is found at Ser-89. Residues Lys-125 and Lys-241 each participate in a glycyl lysine isopeptide (Lys-Gly) (interchain with G-Cter in ubiquitin) cross-link. The residue at position 265 (Ser-265) is a Phosphoserine; by MAPK. Ser-270 lines the FAD pocket. Ser-298 carries the post-translational modification Phosphoserine. Gln-307 is a binding site for FAD. Lys-347 is covalently cross-linked (Glycyl lysine isopeptide (Lys-Gly) (interchain with G-Cter in ubiquitin)). Residues His-373 and 405–407 each bind FAD; that span reads DAD. A required for inhibition of CLOCK-BMAL1-mediated transcription region spans residues 389-488; sequence WVSWESGVRV…IIGVDYPRPI (100 aa). Glycyl lysine isopeptide (Lys-Gly) (interchain with G-Cter in ubiquitin) cross-links involve residues Lys-474 and Lys-503. The disordered stretch occupies residues 532–592; the sequence is VAEPGSSQAG…PTQEPASKDS (61 aa). Positions 536–547 are enriched in polar residues; that stretch reads GSSQAGSISNTG. At Ser-553 the chain carries Phosphoserine; by GSK3-beta. The residue at position 557 (Ser-557) is a Phosphoserine; by DYRK1A and MAPK. Polar residues predominate over residues 582–592; the sequence is MPTQEPASKDS.

This sequence belongs to the DNA photolyase class-1 family. As to quaternary structure, component of the circadian core oscillator, which includes the CRY proteins, CLOCK or NPAS2, BMAL1 or BMAL2, CSNK1D and/or CSNK1E, TIMELESS, and the PER proteins. Interacts with TIMELESS. Interacts directly with PER1, PER2 and PER3; interaction with PER2 inhibits its ubiquitination and vice versa. Interacts with CLOCK-BMAL1. Interacts with BMAL1. Interacts with CLOCK. Interacts with NFIL3. Interacts with FBXL3 and FBXL21. FBXL3, PER2 and the cofactor FAD compete for overlapping binding sites. FBXL3 cannot bind CRY2 that interacts already with PER2 or that contains bound FAD. Interacts with PPP5C (via TPR repeats); the interaction down-regulates the PPP5C phosphatase activity on CSNK1E. Interacts with nuclear receptors AR and NR3C1/GR; the interaction is ligand dependent. Interacts with PRKDC. Interacts with CIART. Interacts with DDB1, USP7 and TARDBP. Interacts with HNF4A. Interacts with PPARA. Interacts with PPARG in a ligand-dependent manner. Interacts with PPARD (via domain NR LBD) in a ligand-dependent manner. Interacts with NR1I2 (via domain NR LBD) in a ligand-dependent manner. Interacts with NR1I3 and VDR in a ligand-dependent manner. Requires FAD as cofactor. The cofactor is (6R)-5,10-methylene-5,6,7,8-tetrahydrofolate. Post-translationally, phosphorylation on Ser-265 by MAPK is important for the inhibition of CLOCK-BMAL1-mediated transcriptional activity. Phosphorylation by CSKNE requires interaction with PER1 or PER2. Phosphorylated in a circadian manner at Ser-553 and Ser-557 in the suprachiasmatic nucleus (SCN) and liver. Phosphorylation at Ser-557 by DYRK1A promotes subsequent phosphorylation at Ser-553 by GSK3-beta: the two-step phosphorylation at the neighboring Ser residues leads to its proteasomal degradation. In terms of processing, ubiquitinated by the SCF(FBXL3) and SCF(FBXL21) complexes, regulating the balance between degradation and stabilization. The SCF(FBXL3) complex is mainly nuclear and mediates ubiquitination and subsequent degradation of CRY2. In contrast, cytoplasmic SCF(FBXL21) complex-mediated ubiquitination leads to stabilize CRY2 and counteract the activity of the SCF(FBXL3) complex. The SCF(FBXL3) and SCF(FBXL21) complexes probably mediate ubiquitination at different Lys residues. The SCF(FBXL3) complex recognizes and binds CRY2 phosphorylated at Ser-553 and Ser-557. Ubiquitination may be inhibited by PER2. Deubiquitinated by USP7. Expression in the retina is restricted to the photoreceptor layer (at protein level). Expressed in all tissues examined including heart, brain, spleen, lung, liver, skeletal muscle, kidney and testis. Weak expression in spleen.

It localises to the cytoplasm. The protein localises to the nucleus. KL001 (N-[3-(9H-carbazol-9-yl)-2-hydroxypropyl]-N-(2-furanylmethyl)-methanesulfonamide) binds to CRY1 and stabilizes it by inhibiting FBXL3- and ubiquitin-dependent degradation of CRY1 resulting in lengthening of the circadian periods. KL001-mediated CRY1 stabilization can inhibit glucagon-induced gluconeogenesis in primary hepatocytes. In terms of biological role, transcriptional repressor which forms a core component of the circadian clock. The circadian clock, an internal time-keeping system, regulates various physiological processes through the generation of approximately 24 hour circadian rhythms in gene expression, which are translated into rhythms in metabolism and behavior. It is derived from the Latin roots 'circa' (about) and 'diem' (day) and acts as an important regulator of a wide array of physiological functions including metabolism, sleep, body temperature, blood pressure, endocrine, immune, cardiovascular, and renal function. Consists of two major components: the central clock, residing in the suprachiasmatic nucleus (SCN) of the brain, and the peripheral clocks that are present in nearly every tissue and organ system. Both the central and peripheral clocks can be reset by environmental cues, also known as Zeitgebers (German for 'timegivers'). The predominant Zeitgeber for the central clock is light, which is sensed by retina and signals directly to the SCN. The central clock entrains the peripheral clocks through neuronal and hormonal signals, body temperature and feeding-related cues, aligning all clocks with the external light/dark cycle. Circadian rhythms allow an organism to achieve temporal homeostasis with its environment at the molecular level by regulating gene expression to create a peak of protein expression once every 24 hours to control when a particular physiological process is most active with respect to the solar day. Transcription and translation of core clock components (CLOCK, NPAS2, BMAL1, BMAL2, PER1, PER2, PER3, CRY1 and CRY2) plays a critical role in rhythm generation, whereas delays imposed by post-translational modifications (PTMs) are important for determining the period (tau) of the rhythms (tau refers to the period of a rhythm and is the length, in time, of one complete cycle). A diurnal rhythm is synchronized with the day/night cycle, while the ultradian and infradian rhythms have a period shorter and longer than 24 hours, respectively. Disruptions in the circadian rhythms contribute to the pathology of cardiovascular diseases, cancer, metabolic syndromes and aging. A transcription/translation feedback loop (TTFL) forms the core of the molecular circadian clock mechanism. Transcription factors, CLOCK or NPAS2 and BMAL1 or BMAL2, form the positive limb of the feedback loop, act in the form of a heterodimer and activate the transcription of core clock genes and clock-controlled genes (involved in key metabolic processes), harboring E-box elements (5'-CACGTG-3') within their promoters. The core clock genes: PER1/2/3 and CRY1/2 which are transcriptional repressors form the negative limb of the feedback loop and interact with the CLOCK|NPAS2-BMAL1|BMAL2 heterodimer inhibiting its activity and thereby negatively regulating their own expression. This heterodimer also activates nuclear receptors NR1D1/2 and RORA/B/G, which form a second feedback loop and which activate and repress BMAL1 transcription, respectively. CRY1 and CRY2 have redundant functions but also differential and selective contributions at least in defining the pace of the SCN circadian clock and its circadian transcriptional outputs. Less potent transcriptional repressor in cerebellum and liver than CRY1, though less effective in lengthening the period of the SCN oscillator. Seems to play a critical role in tuning SCN circadian period by opposing the action of CRY1. With CRY1, dispensable for circadian rhythm generation but necessary for the development of intercellular networks for rhythm synchrony. May mediate circadian regulation of cAMP signaling and gluconeogenesis by blocking glucagon-mediated increases in intracellular cAMP concentrations and in CREB1 phosphorylation. Besides its role in the maintenance of the circadian clock, is also involved in the regulation of other processes. Plays a key role in glucose and lipid metabolism modulation, in part, through the transcriptional regulation of genes involved in these pathways, such as LEP or ACSL4. Represses glucocorticoid receptor NR3C1/GR-induced transcriptional activity by binding to glucocorticoid response elements (GREs). Represses the CLOCK-BMAL1 induced transcription of BHLHE40/DEC1 and NAMPT. Represses PPARD and its target genes in the skeletal muscle and limits exercise capacity. Represses the transcriptional activity of NR1I2. In Mus musculus (Mouse), this protein is Cryptochrome-2 (Cry2).